The chain runs to 1042 residues: Diacylglycerol lipase-alpha (1042 aa).

At 1-22 (MPGIVVFRRRWSVGSDDLVLPA) the chain is on the cytoplasmic side. Residues 23-43 (IFLFLLHTTWFVILSVVLFGL) traverse the membrane as a helical segment. The Extracellular portion of the chain corresponds to 44-60 (VYNPHEACSLNLVDHGR). Residues 61–81 (GYLGILLSCMIAEMAIIWLSM) form a helical membrane-spanning segment. The Cytoplasmic segment spans residues 82 to 101 (RGGILYTEPRDSMQYVLYVR). Residues 102–122 (LAILVIEFIYAIVGIVWLTQY) form a helical membrane-spanning segment. Residues 123-136 (YTSCNDLTAKNVTL) are Extracellular-facing. Residue N133 is glycosylated (N-linked (GlcNAc...) asparagine). Residues 137–157 (GMVVCNWVVILSVCITVLCVF) form a helical membrane-spanning segment. The Cytoplasmic segment spans residues 158 to 1042 (DPTGRTFVKL…KQDELVISAR (885 aa)). Residues S472 and D524 each act as charge relay system in the active site. A phosphoserine mark is found at S727, S729, S732, S743, S782, S784, S806, S808, S833, S847, and S952. The interval 846-903 (LSKHSQDTQPLEAALGSGGVTPERPPSAAANDEEEEVGGGGGGPASRGELALHNGRLG) is disordered. The interval 1014–1042 (LAADKIRTSTPTGHGASPAKQDELVISAR) is disordered. A Phosphothreonine modification is found at T1023.

Belongs to the AB hydrolase superfamily. Lipase family. Interacts (via C-terminal) with CAMK2A; leading to the phosphorylation and inhibition of DAGLA enzymatic activity. Interacts (via PPXXF motif) with HOMER1 and HOMER2; this interaction is required for DAGLA membrane localization. Requires Ca(2+) as cofactor. Phosphorylated at Ser-782 and Ser-808 by CAMK2A; phosphorylation by CAMK2A inhibits diacylglycerol lipase activity. In terms of tissue distribution, highly expressed in brain and pancreas.

Its subcellular location is the cell membrane. The protein resides in the postsynaptic density membrane. It is found in the early endosome membrane. It localises to the cell projection. The protein localises to the dendritic spine membrane. It catalyses the reaction a 1,2-diacyl-sn-glycerol + H2O = a 2-acylglycerol + a fatty acid + H(+). The enzyme catalyses 1-octadecanoyl-2-(5Z,8Z,11Z,14Z-eicosatetraenoyl)-sn-glycerol + H2O = 2-(5Z,8Z,11Z,14Z-eicosatetraenoyl)-glycerol + octadecanoate + H(+). It carries out the reaction 1,2-di-(9Z-octadecenoyl)-sn-glycerol + H2O = 2-(9Z-octadecenoyl)-glycerol + (9Z)-octadecenoate + H(+). The catalysed reaction is 1-(9Z-octadecenoyl)-2-(5Z,8Z,11Z,14Z-eicosatetraenoyl)-sn-glycerol + H2O = 2-(5Z,8Z,11Z,14Z-eicosatetraenoyl)-glycerol + (9Z)-octadecenoate + H(+). It catalyses the reaction 1-(9Z-octadecenoyl)-2-octadecanoyl-sn-glycerol + H2O = 2-octadecanoylglycerol + (9Z)-octadecenoate + H(+). The enzyme catalyses 1-(9Z-octadecenoyl)-2-(9Z,12Z-octadecadienoyl)-sn-glycerol + H2O = 2-(9Z,12Z-octadecadienoyl)-glycerol + (9Z)-octadecenoate + H(+). It carries out the reaction 1-(9Z-octadecenoyl)-2-O-(5Z,8Z,11Z,14Z-eicosatetraenyl)-sn-glycerol + H2O = 2-O-(5Z,8Z,11Z,14Z)-eicosatetraenylglycerol + (9Z)-octadecenoate + H(+). Its activity is regulated as follows. Inhibited by 1,2,3-triazole urea covalent inhibitors KT172, DH376 and DO34. Inhibited by p-hydroxy-mercuri-benzoate and HgCl(2), but not to PMSF. Also inhibited by RHC80267. Diacylglycerol lipase activity is inhibited by the phosphorylation of Ser-782 and Ser-808 by CAMK2A. Functionally, serine hydrolase that hydrolyzes arachidonic acid-esterified diacylglycerols (DAGs) to produce the principal endocannabinoid, 2-arachidonoylglycerol (2-AG). Preferentially hydrolyzes sn-1 fatty acids from diacylglycerols (DAG) that contain arachidonic acid (AA) esterified at the sn-2 position to biosynthesize 2-AG. Has negligible activity against other lipids including monoacylglycerols and phospholipids. Plays a key role in regulating 2-AG signaling in the central nervous system (CNS). Regulates 2-AG involved in retrograde suppression at central synapses. Supports axonal growth during development and adult neurogenesis. Plays a role for eCB signaling in the physiological regulation of anxiety and depressive behaviors. Also regulates neuroinflammatory responses in the brain, in particular, LPS-induced microglial activation. The polypeptide is Diacylglycerol lipase-alpha (DAGLA) (Homo sapiens (Human)).